Consider the following 1299-residue polypeptide: DNA-directed RNA polymerase subunit beta' (1299 aa).

Residues Cys-60, Cys-62, Cys-75, and Cys-78 each coordinate Zn(2+). Mg(2+)-binding residues include Asp-535, Asp-537, and Asp-539. The Zn(2+) site is built by Cys-877, Cys-954, Cys-961, and Cys-964.

The protein belongs to the RNA polymerase beta' chain family. In terms of assembly, the RNAP catalytic core consists of 2 alpha, 1 beta, 1 beta' and 1 omega subunit. When a sigma factor is associated with the core the holoenzyme is formed, which can initiate transcription. It depends on Mg(2+) as a cofactor. Zn(2+) serves as cofactor.

It carries out the reaction RNA(n) + a ribonucleoside 5'-triphosphate = RNA(n+1) + diphosphate. Its function is as follows. DNA-dependent RNA polymerase catalyzes the transcription of DNA into RNA using the four ribonucleoside triphosphates as substrates. The chain is DNA-directed RNA polymerase subunit beta' from Pseudarthrobacter chlorophenolicus (strain ATCC 700700 / DSM 12829 / CIP 107037 / JCM 12360 / KCTC 9906 / NCIMB 13794 / A6) (Arthrobacter chlorophenolicus).